We begin with the raw amino-acid sequence, 636 residues long: DNA mismatch repair protein MutL (636 aa).

Residues 332-344 (HAGEQGDSLRTDI) are compositionally biased toward basic and acidic residues. Disordered stretches follow at residues 332 to 360 (HAGE…PADN) and 417 to 443 (ASAP…SDDA). Positions 417–437 (ASAPADAAPAQASEPAAAPQA) are enriched in low complexity.

The protein belongs to the DNA mismatch repair MutL/HexB family.

Functionally, this protein is involved in the repair of mismatches in DNA. It is required for dam-dependent methyl-directed DNA mismatch repair. May act as a 'molecular matchmaker', a protein that promotes the formation of a stable complex between two or more DNA-binding proteins in an ATP-dependent manner without itself being part of a final effector complex. This chain is DNA mismatch repair protein MutL, found in Ralstonia nicotianae (strain ATCC BAA-1114 / GMI1000) (Ralstonia solanacearum).